We begin with the raw amino-acid sequence, 129 residues long: Prefoldin subunit 4 (129 aa).

An N-acetylmethionine modification is found at M1.

Belongs to the prefoldin subunit beta family. In terms of assembly, heterohexamer of two PFD-alpha type and four PFD-beta type subunits.

Functionally, binds specifically to cytosolic chaperonin (c-CPN) and transfers target proteins to it. Binds to nascent polypeptide chain and promotes folding in an environment in which there are many competing pathways for nonnative proteins. In Saccharomyces cerevisiae (strain ATCC 204508 / S288c) (Baker's yeast), this protein is Prefoldin subunit 4 (GIM3).